We begin with the raw amino-acid sequence, 367 residues long: Outer membrane porin C (367 aa).

The signal sequence occupies residues 1-21 (MKVKVLSLLVPALLVAGAANA). Residues 22–33 (AEVYNKDGNKLD) are Periplasmic-facing. The beta stranded transmembrane segment at 34-42 (LYGKVDGLH) threads the bilayer. The Extracellular segment spans residues 43 to 53 (YFSDNKDVDGD). The beta stranded transmembrane segment at 54 to 63 (QTYMRLGFKG) threads the bilayer. The Periplasmic portion of the chain corresponds to 64-73 (ETQVTDQLTG). Residues 74 to 84 (YGQWEYQIQGN) form a beta stranded membrane-spanning segment. Residues 85-91 (SAENENN) are Extracellular-facing. Residues 92-101 (SWTRVAFAGL) traverse the membrane as a beta stranded segment. Residues 102–106 (KFQDV) are Periplasmic-facing. A beta stranded membrane pass occupies residues 107–115 (GSFDYGRNY). The loop L3; may constrict the pore stretch occupies residues 116 to 133 (GVVYDVTSWTDVLPEFGG). Over 116–141 (GVVYDVTSWTDVLPEFGGDTYGSDNF) the chain is Extracellular. Residues 142–154 (MQQRGNGFATYRN) traverse the membrane as a beta stranded segment. Residues 155–163 (TDFFGLVDG) are Periplasmic-facing. A beta stranded membrane pass occupies residues 164 to 171 (LNFAVQYQ). The Extracellular segment spans residues 172–200 (GKNGNPSGEGFTSGVTNNGRDALRQNGDG). The chain crosses the membrane as a beta stranded span at residues 201-207 (VGGSITY). Over 208–211 (DYEG) the chain is Periplasmic. Residues 212–219 (FGIGGAIS) traverse the membrane as a beta stranded segment. At 220–241 (SSKRTDAQNTAAYIGNGDRAET) the chain is on the extracellular side. A beta stranded membrane pass occupies residues 242 to 248 (YTGGLKY). Residues 249-252 (DANN) lie on the Periplasmic side of the membrane. Residues 253–260 (IYLAAQYT) traverse the membrane as a beta stranded segment. Over 261 to 269 (QTYNATRVG) the chain is Extracellular. A beta stranded membrane pass occupies residues 270-286 (SLGWANKAQNFEAVAQY). Residues 287 to 291 (QFDFG) are Periplasmic-facing. The beta stranded transmembrane segment at 292–299 (LRPSLAYL) threads the bilayer. The Extracellular portion of the chain corresponds to 300–318 (QSKGKNLGRGYDDEDILKY). Residues 319–326 (VDVGATYY) traverse the membrane as a beta stranded segment. Residues 327-330 (FNKN) are Periplasmic-facing. Residues 331–338 (MSTYVDYK) form a beta stranded membrane-spanning segment. Topologically, residues 339–358 (INLLDDNQFTRDAGINTDNI) are extracellular. Residues Asn-340, Leu-342, and Thr-355 each coordinate Mg(2+). Residues 359-366 (VALGLVYQ) form a beta stranded membrane-spanning segment. A topological domain (periplasmic) is located at residue Phe-367.

Belongs to the Gram-negative porin family. Homotrimer. Forms mixed heterotrimers with OmpF and with PhoE; other mixed heterotrimers are also probable.

Its subcellular location is the cell outer membrane. Forms pores that allow passive diffusion of small molecules across the outer membrane. In terms of biological role, (Microbial infection) Supports colicin E5 entry in the absence of its major receptor OmpF. Functionally, (Microbial infection) A mixed OmpC-OmpF heterotrimer is the outer membrane receptor for toxin CdiA-EC536; polymorphisms in extracellular loops 4 and 5 of OmpC confer susceptibility to CdiA-EC536-mediated toxicity. This is Outer membrane porin C (ompC) from Escherichia coli (strain K12).